A 239-amino-acid chain; its full sequence is MKRLGVNIDHVATVRNARGSFHPDPFTIAKHVIKCGAHSVTIHLREDRRHIKDSDVVKICKSRKIITNLEISLNKEIIDIALKNRPNFICIVPEKRKEVTTEGGLNLIKNKKKIKSIISLFNKKSIRTSLFIDPNLKDIKIAKELNATCVELHTGKISNLIKENKSYKNEYLKIKKCSELGVKLGIEVHAGHGLDYKTTSILSKIKEITEFNIGHFIIGESLTHGLKKTITIFKEITNK.

Asn-7 provides a ligand contact to 3-amino-2-oxopropyl phosphate. A 1-deoxy-D-xylulose 5-phosphate-binding site is contributed by 9-10 (DH). Arg-18 is a binding site for 3-amino-2-oxopropyl phosphate. Catalysis depends on His-43, which acts as the Proton acceptor. 1-deoxy-D-xylulose 5-phosphate-binding residues include Arg-45 and His-50. Glu-70 acts as the Proton acceptor in catalysis. Thr-100 is a binding site for 1-deoxy-D-xylulose 5-phosphate. His-192 (proton donor) is an active-site residue. Residues Gly-193 and 214 to 215 (GH) each bind 3-amino-2-oxopropyl phosphate.

The protein belongs to the PNP synthase family. Homooctamer; tetramer of dimers.

It localises to the cytoplasm. The catalysed reaction is 3-amino-2-oxopropyl phosphate + 1-deoxy-D-xylulose 5-phosphate = pyridoxine 5'-phosphate + phosphate + 2 H2O + H(+). It functions in the pathway cofactor biosynthesis; pyridoxine 5'-phosphate biosynthesis; pyridoxine 5'-phosphate from D-erythrose 4-phosphate: step 5/5. Functionally, catalyzes the complicated ring closure reaction between the two acyclic compounds 1-deoxy-D-xylulose-5-phosphate (DXP) and 3-amino-2-oxopropyl phosphate (1-amino-acetone-3-phosphate or AAP) to form pyridoxine 5'-phosphate (PNP) and inorganic phosphate. This is Pyridoxine 5'-phosphate synthase from Pelagibacter ubique (strain HTCC1062).